We begin with the raw amino-acid sequence, 739 residues long: Xylosyl- and glucuronyltransferase LARGE2s (739 aa).

Over 1 to 10 (MLCSWRVKLK) the chain is Cytoplasmic. The helical; Signal-anchor for type II membrane protein transmembrane segment at 11–31 (LLLATITLAVLLSWLYLFVGS) threads the bilayer. At 32 to 739 (LEYGRFLLLP…LKYLTAERNL (708 aa)) the chain is on the lumenal side. Residues 80–105 (AEGSDGNPQWAASAEDGPPLGGERNN) form a disordered region. 3 N-linked (GlcNAc...) asparagine glycosylation sites follow: Asn105, Asn131, and Asn217. A xylosyltransferase activity region spans residues 121-396 (LHVAIVCAGH…FLEYDGNLLR (276 aa)). Residues Asp225 and Asp227 each coordinate Mn(2+). N-linked (GlcNAc...) asparagine glycosylation occurs at Asn255. Positions 397 to 739 (RELFGCASLP…LKYLTAERNL (343 aa)) are glucuronyltransferase activity. Asp546 and Asp548 together coordinate Mn(2+).

The protein in the C-terminal section; belongs to the glycosyltransferase 49 family. In the N-terminal section; belongs to the glycosyltransferase 8 family. Requires Mn(2+) as cofactor.

Its subcellular location is the golgi apparatus membrane. The catalysed reaction is 3-O-[beta-D-GlcA-(1-&gt;3)-beta-D-Xyl-(1-&gt;4)-Rib-ol-P-Rib-ol-P-3-beta-D-GalNAc-(1-&gt;3)-beta-D-GlcNAc-(1-&gt;4)-(O-6-P-alpha-D-Man)]-Thr-[protein] + UDP-alpha-D-xylose = 3-O-[alpha-D-Xyl-(1-&gt;3)-beta-D-GlcA-(1-&gt;4)-beta-D-Xyl-(1-&gt;4)-Rib-ol-P-Rib-ol-P-3-beta-D-GalNAc-(1-&gt;3)-beta-D-GlcNAc-(1-&gt;4)-(O-6-P-alpha-D-Man)]-Thr-[protein] + UDP + H(+). It catalyses the reaction 3-O-{(1-&gt;[3)-alpha-D-Xyl-(1-&gt;3)-beta-D-GlcA-(1-&gt;](n)-4)-beta-D-Xyl-(1-&gt;4)-Rib-ol-P-Rib-ol-P-3-beta-D-GalNAc-(1-&gt;3)-beta-D-GlcNAc-(1-&gt;4)-O-6-P-alpha-D-Man}-L-Thr-[protein] + UDP-alpha-D-glucuronate = 3-O-{beta-D-GlcA-(1-&gt;[3)-alpha-D-Xyl-(1-&gt;3)-beta-D-GlcA-(1-&gt;](n)-4)-beta-D-Xyl-(1-&gt;4)-Rib-ol-P-Rib-ol-P-3-beta-D-GalNAc-(1-&gt;3)-beta-D-GlcNAc-(1-&gt;4)-O-6-P-alpha-D-Man}-L-Thr-[protein] + UDP + H(+). The enzyme catalyses 3-O-{beta-D-GlcA-(1-&gt;[3)-alpha-D-Xyl-(1-&gt;3)-beta-D-GlcA-(1-&gt;](n)-4)-beta-D-Xyl-(1-&gt;4)-Rib-ol-P-Rib-ol-P-3-beta-D-GalNAc-(1-&gt;3)-beta-D-GlcNAc-(1-&gt;4)-O-6-P-alpha-D-Man}-L-Thr-[protein] + UDP-alpha-D-xylose = 3-O-{(1-&gt;[3)-alpha-D-Xyl-(1-&gt;3)-beta-D-GlcA-(1-&gt;](n+1)-4)-beta-D-Xyl-(1-&gt;4)-Rib-ol-P-Rib-ol-P-3-beta-D-GalNAc-(1-&gt;3)-beta-D-GlcNAc-(1-&gt;4)-O-6-P-alpha-D-Man}-L-Thr-[protein] + UDP + H(+). It participates in protein modification; protein glycosylation. Functionally, bifunctional glycosyltransferase with both alpha-1,3-xylosyltransferase and beta-1,3-glucuronyltransferase activities involved in the maturation of alpha-dystroglycan (DAG1) by glycosylation leading to DAG1 binding to laminin G-like domain-containing extracellular proteins with high affinity and in a phosphorylated-O-mannosyl trisaccharide dependent manner. Elongates the glucuronyl-beta-1,4-xylose-beta disaccharide primer structure by adding repeating units [-3-Xylose-alpha-1,3-GlcA-beta-1-] to produce a heteropolysaccharide. Supports the maturation of DAG1 more effectively than LARGE1. In addition, can modify both heparan sulfate (HS)- and chondroitin/dermatan sulfate (CS/DS)-proteoglycans (PGs), namely GPC4, with a glycosaminoglycan (GAG)-like polysaccharide composed of xylose and glucuronic acid to confer laminin binding. The chain is Xylosyl- and glucuronyltransferase LARGE2s from Gallus gallus (Chicken).